Reading from the N-terminus, the 146-residue chain is Ribosome maturation factor RimP (146 aa).

Belongs to the RimP family.

It localises to the cytoplasm. Its function is as follows. Required for maturation of 30S ribosomal subunits. The polypeptide is Ribosome maturation factor RimP (Helicobacter pylori (strain P12)).